A 528-amino-acid chain; its full sequence is Lanosterol 14-alpha demethylase (528 aa).

Residues 15 to 37 traverse the membrane as a helical segment; that stretch reads LSLSVTQQISILLGVPFVYNLVW. Tyr64 contacts oteseconazole. Tyr118 contributes to the itraconazole binding site. Position 307 (Gly307) interacts with posaconazole. An oteseconazole-binding site is contributed by His377. Residue Cys470 coordinates heme.

It belongs to the cytochrome P450 family. It depends on heme as a cofactor.

It is found in the endoplasmic reticulum membrane. It catalyses the reaction a 14alpha-methyl steroid + 3 reduced [NADPH--hemoprotein reductase] + 3 O2 = a Delta(14) steroid + formate + 3 oxidized [NADPH--hemoprotein reductase] + 4 H2O + 4 H(+). The catalysed reaction is a 14alpha-methyl steroid + reduced [NADPH--hemoprotein reductase] + O2 = a 14alpha-hydroxymethyl steroid + oxidized [NADPH--hemoprotein reductase] + H2O + H(+). It carries out the reaction a 14alpha-hydroxymethyl steroid + reduced [NADPH--hemoprotein reductase] + O2 = a 14alpha-formyl steroid + oxidized [NADPH--hemoprotein reductase] + 2 H2O + H(+). The enzyme catalyses a 14alpha-formyl steroid + reduced [NADPH--hemoprotein reductase] + O2 = a Delta(14) steroid + formate + oxidized [NADPH--hemoprotein reductase] + H2O + 2 H(+). It catalyses the reaction lanosterol + 3 reduced [NADPH--hemoprotein reductase] + 3 O2 = 4,4-dimethyl-5alpha-cholesta-8,14,24-trien-3beta-ol + formate + 3 oxidized [NADPH--hemoprotein reductase] + 4 H2O + 4 H(+). The catalysed reaction is lanosterol + reduced [NADPH--hemoprotein reductase] + O2 = 32-hydroxylanosterol + oxidized [NADPH--hemoprotein reductase] + H2O + H(+). It carries out the reaction 32-hydroxylanosterol + reduced [NADPH--hemoprotein reductase] + O2 = 32-oxolanosterol + oxidized [NADPH--hemoprotein reductase] + 2 H2O + H(+). The enzyme catalyses 32-oxolanosterol + reduced [NADPH--hemoprotein reductase] + O2 = 4,4-dimethyl-5alpha-cholesta-8,14,24-trien-3beta-ol + formate + oxidized [NADPH--hemoprotein reductase] + H2O + 2 H(+). It catalyses the reaction eburicol + 3 reduced [NADPH--hemoprotein reductase] + 3 O2 = 14-demethyleburicol + formate + 3 oxidized [NADPH--hemoprotein reductase] + 4 H2O + 4 H(+). The catalysed reaction is eburicol + reduced [NADPH--hemoprotein reductase] + O2 = 32-hydroxyeburicol + oxidized [NADPH--hemoprotein reductase] + H2O + H(+). It carries out the reaction 32-hydroxyeburicol + reduced [NADPH--hemoprotein reductase] + O2 = 32-oxoeburicol + oxidized [NADPH--hemoprotein reductase] + 2 H2O + H(+). The enzyme catalyses 32-oxoeburicol + reduced [NADPH--hemoprotein reductase] + O2 = 14-demethyleburicol + formate + oxidized [NADPH--hemoprotein reductase] + H2O + 2 H(+). It participates in steroid biosynthesis; zymosterol biosynthesis; zymosterol from lanosterol: step 1/6. Its activity is regulated as follows. The catalytic activity is inhibited by the binding of azoles clotrimazole, miconazole, fluconazole, ketoconazole, oteseconazole (VT-1161), tetraconazole, the triazole SCH39304, and the triazole derivative ICI 153066. Functionally, sterol 14alpha-demethylase that plays a critical role in the third module of ergosterol biosynthesis pathway, being ergosterol the major sterol component in fungal membranes that participates in a variety of functions. The third module or late pathway involves the ergosterol synthesis itself through consecutive reactions that mainly occur in the endoplasmic reticulum (ER) membrane. In filamentous fungi, during the initial step of this module, lanosterol (lanosta-8,24-dien-3beta-ol) can be metabolized to eburicol. Sterol 14alpha-demethylase catalyzes the three-step oxidative removal of the 14alpha-methyl group (C-32) of both these sterols in the form of formate, and converts eburicol and lanosterol to 14-demethyleburicol (4,4,24-trimethylergosta-8,14,24(28)-trienol) and 4,4-dimethyl-5alpha-cholesta-8,14,24-trien-3beta-ol, respectively, which are further metabolized by other enzymes in the pathway to ergosterol. Can also use substrates not intrinsic to fungi, such as 24,25-dihydrolanosterol (DHL), producing 4,4-dimethyl-8,14-cholestadien-3-beta-ol, but at lower rates than the endogenous substrates. This chain is Lanosterol 14-alpha demethylase, found in Candida albicans (strain SC5314 / ATCC MYA-2876) (Yeast).